A 61-amino-acid polypeptide reads, in one-letter code: Small ribosomal subunit protein uS14B (61 aa).

4 residues coordinate Zn(2+): Cys24, Cys27, Cys40, and Cys43.

The protein belongs to the universal ribosomal protein uS14 family. Zinc-binding uS14 subfamily. In terms of assembly, part of the 30S ribosomal subunit. Contacts proteins S3 and S10. It depends on Zn(2+) as a cofactor.

In terms of biological role, binds 16S rRNA, required for the assembly of 30S particles and may also be responsible for determining the conformation of the 16S rRNA at the A site. This Saccharopolyspora erythraea (strain ATCC 11635 / DSM 40517 / JCM 4748 / NBRC 13426 / NCIMB 8594 / NRRL 2338) protein is Small ribosomal subunit protein uS14B.